Here is a 197-residue protein sequence, read N- to C-terminus: Probable GTP-binding protein EngB (197 aa).

An EngB-type G domain is found at 2–186 (KVKEVIFAGR…KRDLKQYLLS (185 aa)). Residues 10–17 (GRSNVGKS), 35–39 (GTTIR), 52–55 (DLPG), 132–135 (NKMD), and 166–168 (VCA) each bind GTP. 2 residues coordinate Mg(2+): Ser-17 and Thr-37.

Belongs to the TRAFAC class TrmE-Era-EngA-EngB-Septin-like GTPase superfamily. EngB GTPase family. Mg(2+) serves as cofactor.

In terms of biological role, necessary for normal cell division and for the maintenance of normal septation. This chain is Probable GTP-binding protein EngB, found in Archaeoglobus fulgidus (strain ATCC 49558 / DSM 4304 / JCM 9628 / NBRC 100126 / VC-16).